We begin with the raw amino-acid sequence, 432 residues long: Adenylosuccinate synthetase (432 aa).

Residues 13 to 19 and 41 to 43 contribute to the GTP site; these read GDEGKGK and GHT. Aspartate 14 functions as the Proton acceptor in the catalytic mechanism. Residues aspartate 14 and glycine 41 each contribute to the Mg(2+) site. IMP contacts are provided by residues 14 to 17, 39 to 42, threonine 130, arginine 144, glutamine 225, threonine 240, and arginine 304; these read DEGK and NAGH. Histidine 42 serves as the catalytic Proton donor. 300–306 contacts substrate; sequence ATTGRRR. Residues arginine 306, 332–334, and 415–417 contribute to the GTP site; these read KLD and STG.

It belongs to the adenylosuccinate synthetase family. As to quaternary structure, homodimer. It depends on Mg(2+) as a cofactor.

The protein resides in the cytoplasm. It catalyses the reaction IMP + L-aspartate + GTP = N(6)-(1,2-dicarboxyethyl)-AMP + GDP + phosphate + 2 H(+). The protein operates within purine metabolism; AMP biosynthesis via de novo pathway; AMP from IMP: step 1/2. Functionally, plays an important role in the de novo pathway of purine nucleotide biosynthesis. Catalyzes the first committed step in the biosynthesis of AMP from IMP. The protein is Adenylosuccinate synthetase of Edwardsiella ictaluri (strain 93-146).